The chain runs to 254 residues: 4-hydroxy-tetrahydrodipicolinate reductase (254 aa).

Residue 8–13 (GAFGRM) participates in NAD(+) binding. Residue Lys-36 participates in NADP(+) binding. Residues 89–91 (GTT) and 115–118 (STNY) each bind NAD(+). Residue His-147 is the Proton donor/acceptor of the active site. Position 148 (His-148) interacts with (S)-2,3,4,5-tetrahydrodipicolinate. Catalysis depends on Lys-151, which acts as the Proton donor. A (S)-2,3,4,5-tetrahydrodipicolinate-binding site is contributed by 157–158 (GT).

This sequence belongs to the DapB family.

The protein resides in the cytoplasm. The catalysed reaction is (S)-2,3,4,5-tetrahydrodipicolinate + NAD(+) + H2O = (2S,4S)-4-hydroxy-2,3,4,5-tetrahydrodipicolinate + NADH + H(+). It catalyses the reaction (S)-2,3,4,5-tetrahydrodipicolinate + NADP(+) + H2O = (2S,4S)-4-hydroxy-2,3,4,5-tetrahydrodipicolinate + NADPH + H(+). Its pathway is amino-acid biosynthesis; L-lysine biosynthesis via DAP pathway; (S)-tetrahydrodipicolinate from L-aspartate: step 4/4. Functionally, catalyzes the conversion of 4-hydroxy-tetrahydrodipicolinate (HTPA) to tetrahydrodipicolinate. The protein is 4-hydroxy-tetrahydrodipicolinate reductase of Methanospirillum hungatei JF-1 (strain ATCC 27890 / DSM 864 / NBRC 100397 / JF-1).